A 616-amino-acid chain; its full sequence is Dihydroxy-acid dehydratase (616 aa).

Asp-81 contacts Mg(2+). Cys-122 contacts [2Fe-2S] cluster. Asp-123 and Lys-124 together coordinate Mg(2+). Residue Lys-124 is modified to N6-carboxylysine. Cys-195 serves as a coordination point for [2Fe-2S] cluster. Mg(2+) is bound at residue Glu-491. The active-site Proton acceptor is Ser-517.

It belongs to the IlvD/Edd family. Homodimer. Requires [2Fe-2S] cluster as cofactor. Mg(2+) is required as a cofactor.

The catalysed reaction is (2R)-2,3-dihydroxy-3-methylbutanoate = 3-methyl-2-oxobutanoate + H2O. It catalyses the reaction (2R,3R)-2,3-dihydroxy-3-methylpentanoate = (S)-3-methyl-2-oxopentanoate + H2O. The protein operates within amino-acid biosynthesis; L-isoleucine biosynthesis; L-isoleucine from 2-oxobutanoate: step 3/4. Its pathway is amino-acid biosynthesis; L-valine biosynthesis; L-valine from pyruvate: step 3/4. Functionally, functions in the biosynthesis of branched-chain amino acids. Catalyzes the dehydration of (2R,3R)-2,3-dihydroxy-3-methylpentanoate (2,3-dihydroxy-3-methylvalerate) into 2-oxo-3-methylpentanoate (2-oxo-3-methylvalerate) and of (2R)-2,3-dihydroxy-3-methylbutanoate (2,3-dihydroxyisovalerate) into 2-oxo-3-methylbutanoate (2-oxoisovalerate), the penultimate precursor to L-isoleucine and L-valine, respectively. The chain is Dihydroxy-acid dehydratase from Escherichia coli (strain 55989 / EAEC).